The sequence spans 163 residues: Type VII secretion system protein EsaG (163 aa).

As to quaternary structure, interacts with EssD (via C-terminus). Interacts with EssE.

The protein localises to the cytoplasm. In terms of biological role, component of the type VII secretion system (Ess). Also acts as part of toxin-antitoxin system. Counteracts the toxic effect of EssD via direct interaction. The sequence is that of Type VII secretion system protein EsaG from Staphylococcus aureus (strain NCTC 8325 / PS 47).